Here is a 268-residue protein sequence, read N- to C-terminus: Indole-3-glycerol phosphate synthase (268 aa).

The protein belongs to the TrpC family.

It carries out the reaction 1-(2-carboxyphenylamino)-1-deoxy-D-ribulose 5-phosphate + H(+) = (1S,2R)-1-C-(indol-3-yl)glycerol 3-phosphate + CO2 + H2O. It functions in the pathway amino-acid biosynthesis; L-tryptophan biosynthesis; L-tryptophan from chorismate: step 4/5. In Acinetobacter baumannii (strain ACICU), this protein is Indole-3-glycerol phosphate synthase.